The following is a 525-amino-acid chain: Chromosomal replication initiator protein DnaA (525 aa).

The domain I, interacts with DnaA modulators stretch occupies residues 1–71 (MNDFWQHCSA…SDLARDFWNA (71 aa)). Residues 71–188 (APIEVQFVLD…GEADSMYERS (118 aa)) are domain II. Residues 160–182 (AAAGRRTWRPGPGAAPANGGEAD) are disordered. Over residues 169 to 181 (PGPGAAPANGGEA) the composition is skewed to low complexity. Residues 189–405 (KLNPVLTFDN…GALRKILAYS (217 aa)) form a domain III, AAA+ region region. The ATP site is built by Gly233, Gly235, Lys236, and Thr237. The interval 406 to 525 (KFHGREISIE…LHVLEQTLKG (120 aa)) is domain IV, binds dsDNA.

This sequence belongs to the DnaA family. In terms of assembly, oligomerizes as a right-handed, spiral filament on DNA at oriC.

It localises to the cytoplasm. Functionally, plays an essential role in the initiation and regulation of chromosomal replication. ATP-DnaA binds to the origin of replication (oriC) to initiate formation of the DNA replication initiation complex once per cell cycle. Binds the DnaA box (a 9 base pair repeat at the origin) and separates the double-stranded (ds)DNA. Forms a right-handed helical filament on oriC DNA; dsDNA binds to the exterior of the filament while single-stranded (ss)DNA is stabiized in the filament's interior. The ATP-DnaA-oriC complex binds and stabilizes one strand of the AT-rich DNA unwinding element (DUE), permitting loading of DNA polymerase. After initiation quickly degrades to an ADP-DnaA complex that is not apt for DNA replication. Binds acidic phospholipids. The chain is Chromosomal replication initiator protein DnaA from Burkholderia ambifaria (strain ATCC BAA-244 / DSM 16087 / CCUG 44356 / LMG 19182 / AMMD) (Burkholderia cepacia (strain AMMD)).